Consider the following 64-residue polypeptide: Large ribosomal subunit protein bL35 (64 aa).

Belongs to the bacterial ribosomal protein bL35 family.

The sequence is that of Large ribosomal subunit protein bL35 from Pseudomonas entomophila (strain L48).